Reading from the N-terminus, the 150-residue chain is Large ribosomal subunit protein bL9 (150 aa).

It belongs to the bacterial ribosomal protein bL9 family.

Functionally, binds to the 23S rRNA. This is Large ribosomal subunit protein bL9 from Neisseria meningitidis serogroup A / serotype 4A (strain DSM 15465 / Z2491).